Reading from the N-terminus, the 347-residue chain is MSFKVYDPIAELIATQFPTSNPDLQIINNDVLVVSPHKITLPMGPQNAGDVTNKAYVDQAVMSAAVPVASSTTVGTIQMAGDLEGSSGTNPIIAANKITLNKLQKIGPKMVIGNPNSDWNNTQEIELDSSFRIVDNRLNAGIVPISSTDPNKSNTVIPAPQQNGLFYLDSSGRVWVWAEHYYKCITPSRYISKWMGVGDFQELTVGQSVMWDSGRPSIETVSTQGLEVEWISSTNFTLSSLYLIPIVVKVTICIPLLGQPDQMAKFVLYSVSSAQQPRTGIVLTTDSSRSSAPIVSEYITVNWFEPKSYSVQLKEVNSDSGTTVTICSDKWLANPFLDCWITIEEVG.

This is an uncharacterized protein from Invertebrate iridescent virus 3 (IIV-3).